The primary structure comprises 287 residues: Inorganic pyrophosphatase (287 aa).

Arg-79 serves as a coordination point for diphosphate. Mg(2+) contacts are provided by Asp-116, Asp-121, and Asp-153. Positions Asn-244 to Leu-258 are enriched in polar residues. Residues Asn-244–Pro-269 are disordered.

This sequence belongs to the PPase family. The cofactor is Mg(2+).

The protein resides in the cytoplasm. The enzyme catalyses diphosphate + H2O = 2 phosphate + H(+). In terms of biological role, involved in osmoadaptation. The sequence is that of Inorganic pyrophosphatase (ipp1) from Emericella nidulans (strain FGSC A4 / ATCC 38163 / CBS 112.46 / NRRL 194 / M139) (Aspergillus nidulans).